A 1174-amino-acid polypeptide reads, in one-letter code: K(+) efflux antiporter 2, chloroplastic (1174 aa).

Residues 1 to 57 (MDFASSVQRQSMFHGGADFASYCLPNRMISAKLCPKGLGGTRFWDPMIDSKVRSAIR) constitute a chloroplast transit peptide. Topologically, residues 58–565 (SKRNVSYRSS…MFPQQEVNEE (508 aa)) are stromal. Positions 119-141 (GSDDREVTFSKEEKDTREQDSAP) are disordered. Residues 142–350 (SLEELRDLLN…ALQRAEKTLF (209 aa)) adopt a coiled-coil conformation. K170 carries the N6-acetyllysine; by NSI modification. Residues 420-448 (EAEGEAEKSKNVVLTKKQEVQKDLPRESS) are compositionally biased toward basic and acidic residues. Positions 420-457 (EAEGEAEKSKNVVLTKKQEVQKDLPRESSSHNGTKTSL) are disordered. Residues 566–586 (EASLLDVLWLLLASVIFVPLF) form a helical membrane-spanning segment. The Chloroplast intermembrane segment spans residues 587 to 592 (QKIPGG). The helical transmembrane segment at 593–613 (SPVLGYLAAGILIGPYGLSII) threads the bilayer. Topologically, residues 614-620 (RNVHGTK) are stromal. The helical transmembrane segment at 621–641 (AIAEFGVVFLLFNIGLELSVE) threads the bilayer. Topologically, residues 642 to 648 (RLSSMKK) are chloroplast intermembrane. A helical membrane pass occupies residues 649–669 (YVFGLGSAQVLVTAAVIGLIT). The Stromal portion of the chain corresponds to 670-678 (HYVAGQAGP). A helical transmembrane segment spans residues 679-699 (AAIVIGNGLALSSTAVVLQVL). Residues 700–713 (QERGESTSRHGRAT) are Chloroplast intermembrane-facing. A helical transmembrane segment spans residues 714 to 734 (FSVLLFQDLAVVVLLILIPLI). At 735–746 (SPNSSKGGIGFQ) the chain is on the stromal side. The helical transmembrane segment at 747–767 (AIAEALGLAAIKAAVAITGII) threads the bilayer. The Chloroplast intermembrane segment spans residues 768–807 (AGGRLLLRPIYKQIAENRNAEIFSANTLLVILGTSLLTAR). Residues 808–828 (AGLSMALGAFLAGLLLAETEF) traverse the membrane as a helical segment. Over 829–841 (SLQVESDIAPYRG) the chain is Stromal. Residues 842–862 (LLLGLFFMTVGMSIDPKLLLA) traverse the membrane as a helical segment. Over 863–865 (NFP) the chain is Chloroplast intermembrane. The helical transmembrane segment at 866–886 (LIMGTLGLLLVGKTILVVIIG) threads the bilayer. Residues 887-898 (KLFGISIISAVR) are Stromal-facing. Residues 899–919 (VGLLLAPGGEFAFVAFGEAVN) traverse the membrane as a helical segment. At 920–928 (QGIMTPQLS) the chain is on the chloroplast intermembrane side. The helical transmembrane segment at 929–949 (SLLFLVVGISMALTPWLAAGG) threads the bilayer. Residues 950 to 1174 (QLIASRFELQ…NQIIEGTLAI (225 aa)) are Stromal-facing. The RCK N-terminal domain maps to 975-1092 (QGHIIICGFG…EKAGATAVVP (118 aa)). The tract at residues 1141–1174 (SLGYGFSRSTSKPKPPSPSETSDDNQIIEGTLAI) is disordered.

It belongs to the monovalent cation:proton antiporter 2 (CPA2) transporter (TC 2.A.37) family. KEA (TC 2.A.37.1) subfamily. In terms of processing, acetylated at Lys-170 by the stromal acetyltransferase enzyme NSI. In terms of tissue distribution, detected in leaves, stems and flowers. Expressed in shoots and roots. Mainly localized to leaf veins, hypocotyls, mesophylls and guard cells. Accumulates at high levels in small and dividing plastids (at protein level).

It is found in the plastid. It localises to the chloroplast inner membrane. Its subcellular location is the plastid inner membrane. The enzyme catalyses K(+)(in) + H(+)(out) = K(+)(out) + H(+)(in). With respect to regulation, repressed by sodium ions Na(+). Its function is as follows. Electroneutral K(+)/H(+) efflux antiporter modulating monovalent cation and pH homeostasis in plastids, especially during plastid division and thylakoid membrane formation. Transports K(+) and Cs(+) preferentially relative to Na(+) or Li(+). May function in osmotic adjustment. Collaboratively with KEA1, adjusts alkaline stromal pH upon light to dark transitions in plastids. Together with KEA1, critical for chloroplast development, including chloroplast RNA-metabolism (e.g. rRNA maturation, polysome loading and RNA-protein interactions) and plastid gene expression (PGE), ion homeostasis, and photosynthesis. Contributes, during early seedling development, to the regulation of photosynthesis and abscisic acid- (ABA-) mediated primary root growth in a sucrose-dependent manner. Involved in the regulation of reactive oxygen and nitrogen species (ROS and RNS) metabolism. Required in roots for rapid hyperosmotic-induced Ca(2+) responses and for osmo-sensory potentiation in hyperosmotic conditions. May counteract resilience to drought and salt stress, involving photorespiratory pathway and stomata closure. The polypeptide is K(+) efflux antiporter 2, chloroplastic (Arabidopsis thaliana (Mouse-ear cress)).